Here is a 116-residue protein sequence, read N- to C-terminus: U16-barytoxin-Tl1a (116 aa).

A signal peptide spans 1–20; sequence MKTIIVFLSLLVLATKFGDA. The propeptide occupies 21–74; that stretch reads KEGVNQEQKKEVTQNEFRVEYLNEMAAMSLLQQLEAIESALFEKEAGRNSRQKR. Cystine bridges form between cysteine 75–cysteine 90, cysteine 82–cysteine 95, and cysteine 89–cysteine 110.

It belongs to the neurotoxin 14 (magi-1) family. 06 (ICK-Trit) subfamily. In terms of tissue distribution, expressed by the venom gland.

The protein localises to the secreted. In terms of biological role, ion channel inhibitor. The polypeptide is U16-barytoxin-Tl1a (Trittame loki (Brush-footed trapdoor spider)).